The sequence spans 397 residues: Serpin B10 (397 aa).

The tract at residues 62 to 85 (RDQGVKSSPESEKKRKMEFNSSNS) is disordered. A compositionally biased stretch (basic and acidic residues) spans 70–79 (PESEKKRKME). The Nuclear localization signal motif lies at 74 to 77 (KKRK).

It belongs to the serpin family. Ov-serpin subfamily.

Its subcellular location is the nucleus. It localises to the cytoplasm. Its function is as follows. Protease inhibitor that may play a role in the regulation of protease activities during hematopoiesis and apoptosis induced by TNF. May regulate protease activities in the cytoplasm and in the nucleus. In Papio anubis (Olive baboon), this protein is Serpin B10 (SERPINB10).